The primary structure comprises 198 residues: Glycerol-3-phosphate acyltransferase (198 aa).

6 helical membrane-spanning segments follow: residues 1 to 21 (MHILIISISYFLGSLPTGFLF), 50 to 70 (WPAFFVFIIDVGKGLIAVKIA), 77 to 97 (NLFEVLAGIAAISGHIWPIWL), 111 to 131 (MFIALSWKIGFASLGIFLIIL), 136 to 156 (IVSLSSISAAIFLPFLMFLDI), and 157 to 177 (GSTNHPYFFISLVVSILVIWK).

It belongs to the PlsY family. In terms of assembly, probably interacts with PlsX.

The protein resides in the cell inner membrane. The enzyme catalyses an acyl phosphate + sn-glycerol 3-phosphate = a 1-acyl-sn-glycero-3-phosphate + phosphate. The protein operates within lipid metabolism; phospholipid metabolism. In terms of biological role, catalyzes the transfer of an acyl group from acyl-phosphate (acyl-PO(4)) to glycerol-3-phosphate (G3P) to form lysophosphatidic acid (LPA). This enzyme utilizes acyl-phosphate as fatty acyl donor, but not acyl-CoA or acyl-ACP. In Prochlorococcus marinus subsp. pastoris (strain CCMP1986 / NIES-2087 / MED4), this protein is Glycerol-3-phosphate acyltransferase.